A 224-amino-acid chain; its full sequence is MKFGVVVFPGSNCDRDVAYVTRDLLGQPTRMVWHQDTDIADLDVVIIPGGFSYGDYLRCGAIARFSPVMQQVVEHAQKGKLVLGICNGFQVLTEAGLLPGALARNRDLHFICDRVPLTVESTNSLWTQAYNPGEVITLPIAHGEGRFYADEATLSEIEDNGQVLFRYAGENPNGSLNNIAGICDRQGNVLGMMPHPERASDPVLGGSDGLKLFQGLLEKVVALA.

The Glutamine amidotransferase type-1 domain maps to 3-224 (FGVVVFPGSN…GLLEKVVALA (222 aa)). Cys-86 serves as the catalytic Nucleophile. Residues His-195 and Glu-197 contribute to the active site.

In terms of assembly, part of the FGAM synthase complex composed of 1 PurL, 1 PurQ and 2 PurS subunits.

The protein localises to the cytoplasm. The enzyme catalyses N(2)-formyl-N(1)-(5-phospho-beta-D-ribosyl)glycinamide + L-glutamine + ATP + H2O = 2-formamido-N(1)-(5-O-phospho-beta-D-ribosyl)acetamidine + L-glutamate + ADP + phosphate + H(+). It carries out the reaction L-glutamine + H2O = L-glutamate + NH4(+). It participates in purine metabolism; IMP biosynthesis via de novo pathway; 5-amino-1-(5-phospho-D-ribosyl)imidazole from N(2)-formyl-N(1)-(5-phospho-D-ribosyl)glycinamide: step 1/2. Functionally, part of the phosphoribosylformylglycinamidine synthase complex involved in the purines biosynthetic pathway. Catalyzes the ATP-dependent conversion of formylglycinamide ribonucleotide (FGAR) and glutamine to yield formylglycinamidine ribonucleotide (FGAM) and glutamate. The FGAM synthase complex is composed of three subunits. PurQ produces an ammonia molecule by converting glutamine to glutamate. PurL transfers the ammonia molecule to FGAR to form FGAM in an ATP-dependent manner. PurS interacts with PurQ and PurL and is thought to assist in the transfer of the ammonia molecule from PurQ to PurL. The chain is Phosphoribosylformylglycinamidine synthase subunit PurQ from Trichormus variabilis (strain ATCC 29413 / PCC 7937) (Anabaena variabilis).